The sequence spans 81 residues: Antitoxin VapB28 (81 aa).

Functionally, antitoxin component of a type II toxin-antitoxin (TA) system. This chain is Antitoxin VapB28 (vapB28), found in Mycobacterium tuberculosis (strain CDC 1551 / Oshkosh).